The chain runs to 185 residues: Shikimate kinase (185 aa).

An ATP-binding site is contributed by 21-26 (GVGKTT). Threonine 25 contacts Mg(2+). Substrate-binding residues include aspartate 43, arginine 67, and glycine 90. Arginine 129 contacts ATP. Arginine 147 is a substrate binding site.

It belongs to the shikimate kinase family. As to quaternary structure, monomer. It depends on Mg(2+) as a cofactor.

It is found in the cytoplasm. The catalysed reaction is shikimate + ATP = 3-phosphoshikimate + ADP + H(+). The protein operates within metabolic intermediate biosynthesis; chorismate biosynthesis; chorismate from D-erythrose 4-phosphate and phosphoenolpyruvate: step 5/7. Its function is as follows. Catalyzes the specific phosphorylation of the 3-hydroxyl group of shikimic acid using ATP as a cosubstrate. This chain is Shikimate kinase, found in Bacillus pumilus (strain SAFR-032).